The following is a 380-amino-acid chain: Cytochrome b (380 aa).

A run of 4 helical transmembrane segments spans residues 33–53 (FGSL…FLAM), 77–98 (WLIR…YMHI), 113–133 (WNIG…GYVL), and 178–198 (FFAF…IHLL). Residues His83 and His97 each contribute to the heme b site. Heme b-binding residues include His182 and His196. Position 201 (His201) interacts with a ubiquinone. A run of 4 helical transmembrane segments spans residues 226–246 (YKDL…ALFS), 288–308 (LGGV…PLLH), 320–340 (ITQF…WIGG), and 347–367 (FIII…VLFP).

Belongs to the cytochrome b family. In terms of assembly, the cytochrome bc1 complex contains 3 respiratory subunits (MT-CYB, CYC1 and UQCRFS1), 2 core proteins (UQCRC1 and UQCRC2) and probably 6 low-molecular weight proteins. Heme b is required as a cofactor.

The protein localises to the mitochondrion inner membrane. Component of the ubiquinol-cytochrome c reductase complex (complex III or cytochrome b-c1 complex) that is part of the mitochondrial respiratory chain. The b-c1 complex mediates electron transfer from ubiquinol to cytochrome c. Contributes to the generation of a proton gradient across the mitochondrial membrane that is then used for ATP synthesis. The chain is Cytochrome b (mt-cyb) from Carassius auratus (Goldfish).